The chain runs to 201 residues: Sorting nexin-10 (201 aa).

Positions 8–125 (EEFVSVWVRD…SLHLFLQSHL (118 aa)) are required for interaction with ATP6V1D. Positions 10–127 (FVSVWVRDPR…HLFLQSHLNS (118 aa)) constitute a PX domain. Residues arginine 53, lysine 79, and arginine 94 each contribute to the a 1,2-diacyl-sn-glycero-3-phospho-(1D-myo-inositol-3-phosphate) site. Residues 156–201 (FPEEDEEGKKENDIDYDSESSSSGLGHSSDDSSSHGCKVNTAPQES) are disordered.

Belongs to the sorting nexin family. Interacts with ATP6V1D; may play a role in ciliogenesis.

The protein localises to the cytoplasm. It localises to the endosome membrane. It is found in the cytoskeleton. The protein resides in the microtubule organizing center. Its subcellular location is the centrosome. Functionally, probable phosphoinositide-binding protein involved in protein sorting and membrane trafficking in endosomes. Plays a role in cilium biogenesis through regulation of the transport and the localization of proteins to the cilium. Required for the localization to the cilium of V-ATPase subunit ATP6V1D and ATP6V0D1, and RAB8A. Involved in osteoclast differentiation and therefore bone resorption. This chain is Sorting nexin-10 (SNX10), found in Homo sapiens (Human).